Here is a 665-residue protein sequence, read N- to C-terminus: LisH domain-containing protein ARMC9 (665 aa).

The 33-residue stretch at 7–39 folds into the LisH domain; the sequence is HESELLGLVKEYLDFAEFEDTLKTFLKECKIKG. Residues 204 to 235 adopt a coiled-coil conformation; that stretch reads QSNKDVLQQLHQQLVEAERRSMTYLKRYNRIQ. Ser-582 carries the post-translational modification Phosphoserine. Positions 582 to 603 are enriched in acidic residues; it reads SDDDEDEDDEEDHDTMEADLDK. Disordered stretches follow at residues 582–604 and 636–665; these read SDDD…LDKD and RRGT…GYPA.

Interacts with TOGARAM1, CCDC66, CEP104, CSPP1 and CEP290. Interacts with NDUFAF2.

The protein localises to the cytoplasm. Its subcellular location is the cytoskeleton. It is found in the cilium basal body. The protein resides in the cell projection. It localises to the cilium. The protein localises to the microtubule organizing center. Its subcellular location is the centrosome. It is found in the centriole. In terms of biological role, involved in ciliogenesis. It is required for appropriate acetylation and polyglutamylation of ciliary microtubules, and regulation of cilium length. Acts as a positive regulator of hedgehog (Hh)signaling. May participate in the trafficking and/or retention of GLI2 and GLI3 proteins at the ciliary tip. In Bos taurus (Bovine), this protein is LisH domain-containing protein ARMC9 (ARMC9).